The primary structure comprises 33 residues: Photosystem II reaction center protein Psb30 (33 aa).

A helical transmembrane segment spans residues 5–25 (VVVQLGSLSLIVLAGPIIVLL).

The protein belongs to the Psb30/Ycf12 family. As to quaternary structure, PSII is composed of 1 copy each of membrane proteins PsbA, PsbB, PsbC, PsbD, PsbE, PsbF, PsbH, PsbI, PsbJ, PsbK, PsbL, PsbM, PsbT, PsbX, PsbY, PsbZ, Psb30/Ycf12, peripheral proteins of the oxygen-evolving complex and a large number of cofactors. It forms dimeric complexes.

It localises to the plastid. The protein resides in the chloroplast thylakoid membrane. Functionally, a core subunit of photosystem II (PSII), probably helps stabilize the reaction center. The polypeptide is Photosystem II reaction center protein Psb30 (Mesostigma viride (Green alga)).